Here is a 922-residue protein sequence, read N- to C-terminus: Non-centrosomal microtubule array protein 1 (922 aa).

Polar residues predominate over residues 1 to 10 (MSNERVSTGS). Disordered stretches follow at residues 1-134 (MSNE…HLPP), 250-277 (PVRL…TVPR), 465-491 (KSRH…QMNL), and 533-563 (TQKE…SNLS). Basic and acidic residues-rich tracts occupy residues 43–54 (SMERKDMPDRPK) and 70–94 (PKDR…KECA). Residues 99-113 (SNTSSEHSSRSNSST) show a composition bias toward low complexity. Composition is skewed to basic and acidic residues over residues 256–276 (RGDT…DTVP) and 468–484 (HLSE…ERRG). Over residues 539-563 (SHSTPSQSRHSSSKSSHFNGSSNLS) the composition is skewed to low complexity. A coiled-coil region spans residues 564 to 728 (TSEQLRLQEM…RSVSTLRLEQ (165 aa)).

It is found in the cytoplasm. It localises to the cytoskeleton. The protein resides in the apical cell membrane. Its subcellular location is the cell junction. The protein localises to the hemidesmosome. It is found in the adherens junction. In terms of biological role, plays a role in the assembly of microtubule arrays in the germline acting redundantly with ptrn-1 to control circumferential microtubule assembly along the body which is necessary for larval development, viability, and morphology and integrity of the epidermis. Required for microtubule stability and anchorage by binding to microtubule minus ends. Recruited to hemidesomosomes in early embryonic elongation to direct the nucleation and growth of non-centrosomal microtubules. Required for normal nuclear migration in the embryonic epidermis. Functionally, directs the assembly of non-centrosomal microtubule arrays that determine the position of nuclei within intracellular compartments in the epidermis and this is independent of ptrn-1 activity. The polypeptide is Non-centrosomal microtubule array protein 1 (Caenorhabditis elegans).